A 264-amino-acid chain; its full sequence is Thymidylate synthase (264 aa).

Arginine 21 lines the dUMP pocket. A (6R)-5,10-methylene-5,6,7,8-tetrahydrofolate-binding site is contributed by histidine 51. 126–127 (RR) contributes to the dUMP binding site. Cysteine 146 (nucleophile) is an active-site residue. Residues 166–169 (RSCD), asparagine 177, and 207–209 (HLY) each bind dUMP. Aspartate 169 provides a ligand contact to (6R)-5,10-methylene-5,6,7,8-tetrahydrofolate. Alanine 263 contributes to the (6R)-5,10-methylene-5,6,7,8-tetrahydrofolate binding site.

It belongs to the thymidylate synthase family. Bacterial-type ThyA subfamily. In terms of assembly, homodimer.

It is found in the cytoplasm. The enzyme catalyses dUMP + (6R)-5,10-methylene-5,6,7,8-tetrahydrofolate = 7,8-dihydrofolate + dTMP. It functions in the pathway pyrimidine metabolism; dTTP biosynthesis. Its function is as follows. Catalyzes the reductive methylation of 2'-deoxyuridine-5'-monophosphate (dUMP) to 2'-deoxythymidine-5'-monophosphate (dTMP) while utilizing 5,10-methylenetetrahydrofolate (mTHF) as the methyl donor and reductant in the reaction, yielding dihydrofolate (DHF) as a by-product. This enzymatic reaction provides an intracellular de novo source of dTMP, an essential precursor for DNA biosynthesis. The protein is Thymidylate synthase of Shewanella baltica (strain OS185).